Here is a 327-residue protein sequence, read N- to C-terminus: ATP-dependent 6-phosphofructokinase (327 aa).

Gly12 contributes to the ATP binding site. ADP contacts are provided by residues 22-26 (RGVVR) and 55-60 (RYSVSD). ATP is bound by residues 73–74 (RF) and 103–106 (GDGS). Asp104 is a Mg(2+) binding site. 127 to 129 (TID) is a substrate binding site. Asp129 functions as the Proton acceptor in the catalytic mechanism. Residue Arg156 participates in ADP binding. Substrate contacts are provided by residues Arg164 and 171 to 173 (MGR). Residues 187 to 189 (GCE), Lys213, and 215 to 217 (KKH) contribute to the ADP site. Residues Glu224, Arg245, and 251–254 (HIQR) contribute to the substrate site.

The protein belongs to the phosphofructokinase type A (PFKA) family. ATP-dependent PFK group I subfamily. Prokaryotic clade 'B1' sub-subfamily. As to quaternary structure, homotetramer. Mg(2+) is required as a cofactor.

The protein localises to the cytoplasm. It catalyses the reaction beta-D-fructose 6-phosphate + ATP = beta-D-fructose 1,6-bisphosphate + ADP + H(+). It participates in carbohydrate degradation; glycolysis; D-glyceraldehyde 3-phosphate and glycerone phosphate from D-glucose: step 3/4. With respect to regulation, allosterically activated by ADP and other diphosphonucleosides, and allosterically inhibited by phosphoenolpyruvate. Its function is as follows. Catalyzes the phosphorylation of D-fructose 6-phosphate to fructose 1,6-bisphosphate by ATP, the first committing step of glycolysis. In Hamiltonella defensa subsp. Acyrthosiphon pisum (strain 5AT), this protein is ATP-dependent 6-phosphofructokinase.